The chain runs to 511 residues: Fas-activated serine/threonine kinase (511 aa).

Residues 439-497 (VVLMLRERWHFCRDGRVLLGSRALRERHLGLMGYQLLPLPFEELESQRGLPQLKSYLRQ) form the RAP domain.

This sequence belongs to the FAST protein kinase family. In terms of assembly, interacts with TIA1; the interactions leads to TIA1 phosphorylation. Interacts with TIAR. In terms of processing, autophosphorylated on serine/threonine residues. Activated by dephosphorylation.

The protein resides in the mitochondrion matrix. The catalysed reaction is L-seryl-[Fas-activated protein] + ATP = O-phospho-L-seryl-[Fas-activated protein] + ADP + H(+). The enzyme catalyses L-threonyl-[Fas-activated protein] + ATP = O-phospho-L-threonyl-[Fas-activated protein] + ADP + H(+). It catalyses the reaction L-seryl-[protein] + ATP = O-phospho-L-seryl-[protein] + ADP + H(+). It carries out the reaction L-threonyl-[protein] + ATP = O-phospho-L-threonyl-[protein] + ADP + H(+). In terms of biological role, phosphorylates the splicing regulator TIA1, thereby promoting the inclusion of FAS exon 6, which leads to an mRNA encoding a pro-apoptotic form of the receptor. Required for the biogenesis of some mitochondrial-encoded mRNAs, specifically stabilizes ND6 (NADH dehydrogenase complex subunit 6) mRNA, and regulates its levels. The polypeptide is Fas-activated serine/threonine kinase (Fastk) (Mus musculus (Mouse)).